The sequence spans 180 residues: Large ribosomal subunit protein uL5 (180 aa).

It belongs to the universal ribosomal protein uL5 family. Part of the 50S ribosomal subunit; part of the 5S rRNA/L5/L18/L25 subcomplex. Contacts the 5S rRNA and the P site tRNA. Forms a bridge to the 30S subunit in the 70S ribosome.

This is one of the proteins that bind and probably mediate the attachment of the 5S RNA into the large ribosomal subunit, where it forms part of the central protuberance. In the 70S ribosome it contacts protein S13 of the 30S subunit (bridge B1b), connecting the 2 subunits; this bridge is implicated in subunit movement. Contacts the P site tRNA; the 5S rRNA and some of its associated proteins might help stabilize positioning of ribosome-bound tRNAs. In Synechococcus sp. (strain JA-2-3B'a(2-13)) (Cyanobacteria bacterium Yellowstone B-Prime), this protein is Large ribosomal subunit protein uL5.